Reading from the N-terminus, the 297-residue chain is Inosose dehydratase (297 aa).

This sequence belongs to the IolE/MocC family. The cofactor is glutathione. Requires Co(2+) as cofactor. It depends on Mn(2+) as a cofactor.

It carries out the reaction scyllo-inosose = 3D-3,5/4-trihydroxycyclohexane-1,2-dione + H2O. Its pathway is polyol metabolism; myo-inositol degradation into acetyl-CoA; acetyl-CoA from myo-inositol: step 2/7. In terms of biological role, catalyzes the dehydration of inosose (2-keto-myo-inositol, 2KMI or 2,4,6/3,5-pentahydroxycyclohexanone) to 3D-(3,5/4)-trihydroxycyclohexane-1,2-dione (D-2,3-diketo-4-deoxy-epi-inositol). This Clostridium perfringens (strain 13 / Type A) protein is Inosose dehydratase.